A 491-amino-acid polypeptide reads, in one-letter code: Maintenance of mitochondrial morphology protein 1 (491 aa).

Topologically, residues 1-22 (MTFQQNEPSAVPAQSSLSFTQG) are lumenal. The helical transmembrane segment at 23 to 43 (FLLGQLSVVLLIGAFIKFFIF) threads the bilayer. Residues 44–491 (GEAPPPPSRG…GTLPGGAAAN (448 aa)) are Cytoplasmic-facing. 3 disordered regions span residues 50–95 (PSRG…PVPS), 275–325 (PPLH…SPKS), and 392–491 (RTGV…AAAN). Basic residues predominate over residues 54-64 (LSHRASTHRRS). 2 stretches are compositionally biased toward polar residues: residues 65–78 (NSIYTINPNEGTSR) and 85–95 (STSNVLRPVPS). One can recognise an SMP-LTD domain in the interval 131 to 384 (QPESLDWFNV…EPRVQVVGLP (254 aa)). Residues 275–287 (PPLHTPSPSPSPP) show a composition bias toward pro residues. Polar residues-rich tracts occupy residues 300–315 (TNGSREPTQEAPNAQE) and 403–412 (TGSNAASRSA). Residues 422–434 (RADDIGREPDGLR) are compositionally biased toward basic and acidic residues.

It belongs to the MMM1 family. As to quaternary structure, homodimer. Component of the ER-mitochondria encounter structure (ERMES) or MDM complex, composed of mmm1, mdm10, mdm12 and mdm34. A mmm1 homodimer associates with one molecule of mdm12 on each side in a pairwise head-to-tail manner, and the SMP-LTD domains of mmm1 and mdm12 generate a continuous hydrophobic tunnel for phospholipid trafficking.

It localises to the endoplasmic reticulum membrane. Component of the ERMES/MDM complex, which serves as a molecular tether to connect the endoplasmic reticulum (ER) and mitochondria. Components of this complex are involved in the control of mitochondrial shape and protein biogenesis, and function in nonvesicular lipid trafficking between the ER and mitochondria. The mdm12-mmm1 subcomplex functions in the major beta-barrel assembly pathway that is responsible for biogenesis of all outer membrane beta-barrel proteins, and acts in a late step after the SAM complex. The mdm10-mdm12-mmm1 subcomplex further acts in the TOM40-specific pathway after the action of the mdm12-mmm1 complex. Essential for establishing and maintaining the structure of mitochondria and maintenance of mtDNA nucleoids. This is Maintenance of mitochondrial morphology protein 1 from Aspergillus flavus (strain ATCC 200026 / FGSC A1120 / IAM 13836 / NRRL 3357 / JCM 12722 / SRRC 167).